We begin with the raw amino-acid sequence, 59 residues long: Protein QUA-QUINE STARCH (59 aa).

As to expression, expressed in hypocotyls, leaves, vasculature, hydathodes, trichomes, pedicels, sepals, filaments, mature pollen, stigma papillae, styles, siliques, root and shoot tips, but not in shoot meristem, petals or root epidermis.

The protein localises to the cytoplasm. Its function is as follows. Involved in regulating carbon and nitrogen allocation to starch and protein. The polypeptide is Protein QUA-QUINE STARCH (Arabidopsis thaliana (Mouse-ear cress)).